The following is a 399-amino-acid chain: 4-hydroxy-3-methylbut-2-enyl diphosphate reductase (399 aa).

Cys-66 contributes to the [4Fe-4S] cluster binding site. His-96 contributes to the (2E)-4-hydroxy-3-methylbut-2-enyl diphosphate binding site. His-96 contributes to the dimethylallyl diphosphate binding site. His-96 is a binding site for isopentenyl diphosphate. [4Fe-4S] cluster is bound at residue Cys-157. His-185 serves as a coordination point for (2E)-4-hydroxy-3-methylbut-2-enyl diphosphate. His-185 serves as a coordination point for dimethylallyl diphosphate. His-185 serves as a coordination point for isopentenyl diphosphate. Glu-187 serves as the catalytic Proton donor. Thr-250 serves as a coordination point for (2E)-4-hydroxy-3-methylbut-2-enyl diphosphate. Cys-288 is a [4Fe-4S] cluster binding site. The (2E)-4-hydroxy-3-methylbut-2-enyl diphosphate site is built by Ser-317, Ser-318, Asn-319, and Ser-379. Positions 317, 318, 319, and 379 each coordinate dimethylallyl diphosphate. Isopentenyl diphosphate-binding residues include Ser-317, Ser-318, Asn-319, and Ser-379.

Belongs to the IspH family. Requires [4Fe-4S] cluster as cofactor.

The catalysed reaction is isopentenyl diphosphate + 2 oxidized [2Fe-2S]-[ferredoxin] + H2O = (2E)-4-hydroxy-3-methylbut-2-enyl diphosphate + 2 reduced [2Fe-2S]-[ferredoxin] + 2 H(+). The enzyme catalyses dimethylallyl diphosphate + 2 oxidized [2Fe-2S]-[ferredoxin] + H2O = (2E)-4-hydroxy-3-methylbut-2-enyl diphosphate + 2 reduced [2Fe-2S]-[ferredoxin] + 2 H(+). It functions in the pathway isoprenoid biosynthesis; dimethylallyl diphosphate biosynthesis; dimethylallyl diphosphate from (2E)-4-hydroxy-3-methylbutenyl diphosphate: step 1/1. The protein operates within isoprenoid biosynthesis; isopentenyl diphosphate biosynthesis via DXP pathway; isopentenyl diphosphate from 1-deoxy-D-xylulose 5-phosphate: step 6/6. Functionally, catalyzes the conversion of 1-hydroxy-2-methyl-2-(E)-butenyl 4-diphosphate (HMBPP) into a mixture of isopentenyl diphosphate (IPP) and dimethylallyl diphosphate (DMAPP). Acts in the terminal step of the DOXP/MEP pathway for isoprenoid precursor biosynthesis. The protein is 4-hydroxy-3-methylbut-2-enyl diphosphate reductase of Synechococcus sp. (strain WH7803).